The following is a 223-amino-acid chain: MNPAAAPLTLALSKGRIFEETMPLLAEAGIEVPENPESSRKLILPTSDPGLRLIIVRASDVPTYVQYGAADLGIAGKDVLIEHAAQQSGRLYQPIDLNIAKCRLCVAVRQDFDYQAAVHQGARLRVATKYVQSAREHFAAKGVHVDIIKLYGSMELAPLVGLADAIVDLVSTGGTLRANGLAAVEDVMPISSRLIVNQAALKTRGARLQPLIDAFRRASERIA.

It belongs to the ATP phosphoribosyltransferase family. Short subfamily. In terms of assembly, heteromultimer composed of HisG and HisZ subunits.

The protein localises to the cytoplasm. The catalysed reaction is 1-(5-phospho-beta-D-ribosyl)-ATP + diphosphate = 5-phospho-alpha-D-ribose 1-diphosphate + ATP. The protein operates within amino-acid biosynthesis; L-histidine biosynthesis; L-histidine from 5-phospho-alpha-D-ribose 1-diphosphate: step 1/9. Catalyzes the condensation of ATP and 5-phosphoribose 1-diphosphate to form N'-(5'-phosphoribosyl)-ATP (PR-ATP). Has a crucial role in the pathway because the rate of histidine biosynthesis seems to be controlled primarily by regulation of HisG enzymatic activity. In Bordetella pertussis (strain Tohama I / ATCC BAA-589 / NCTC 13251), this protein is ATP phosphoribosyltransferase.